We begin with the raw amino-acid sequence, 331 residues long: Methionyl-tRNA formyltransferase (331 aa).

110–113 serves as a coordination point for (6S)-5,6,7,8-tetrahydrofolate; that stretch reads SLLP. The disordered stretch occupies residues 312-331; the sequence is HAPAERVSAAGSPAGAGGAP.

Belongs to the Fmt family.

The catalysed reaction is L-methionyl-tRNA(fMet) + (6R)-10-formyltetrahydrofolate = N-formyl-L-methionyl-tRNA(fMet) + (6S)-5,6,7,8-tetrahydrofolate + H(+). Functionally, attaches a formyl group to the free amino group of methionyl-tRNA(fMet). The formyl group appears to play a dual role in the initiator identity of N-formylmethionyl-tRNA by promoting its recognition by IF2 and preventing the misappropriation of this tRNA by the elongation apparatus. This is Methionyl-tRNA formyltransferase from Frankia alni (strain DSM 45986 / CECT 9034 / ACN14a).